The sequence spans 104 residues: Large ribosomal subunit protein bL21 (104 aa).

Belongs to the bacterial ribosomal protein bL21 family. As to quaternary structure, part of the 50S ribosomal subunit. Contacts protein L20.

This protein binds to 23S rRNA in the presence of protein L20. This chain is Large ribosomal subunit protein bL21, found in Streptococcus agalactiae serotype Ia (strain ATCC 27591 / A909 / CDC SS700).